The following is a 396-amino-acid chain: L-aspartate--glyoxylate aminotransferase (396 aa).

At Lys-196 the chain carries N6-(pyridoxal phosphate)lysine.

This sequence belongs to the class-V pyridoxal-phosphate-dependent aminotransferase family. It depends on pyridoxal 5'-phosphate as a cofactor.

The catalysed reaction is oxaloacetate + glycine = glyoxylate + L-aspartate. Catalyzes the transamination of glyoxylate into glycine using L-aspartate as the preferred amino group donor. Is essential for the growth of P.denitrificans in the presence of glycolate and glyoxylate since it functions in glyoxylate assimilation via the beta-hydroxyaspartate cycle (BHAC). Can catalyze the reverse reaction in vitro, and also use L-serine and L-glutamate as amino group donor, but with much less efficiency than L-aspartate. The protein is L-aspartate--glyoxylate aminotransferase of Paracoccus denitrificans (strain Pd 1222).